The chain runs to 44 residues: Photosystem I reaction center subunit IX (44 aa).

A helical transmembrane segment spans residues 7-27; the sequence is YLSVAPVLSTLWFGSLAGLLI.

This sequence belongs to the PsaJ family.

Its subcellular location is the plastid. The protein resides in the chloroplast thylakoid membrane. Functionally, may help in the organization of the PsaE and PsaF subunits. The chain is Photosystem I reaction center subunit IX from Fagopyrum esculentum subsp. ancestrale (Wild buckwheat).